Consider the following 493-residue polypeptide: 3-octaprenyl-4-hydroxybenzoate carboxy-lyase (493 aa).

N172 is a Mn(2+) binding site. Prenylated FMN-binding positions include 175–177 (IYR), 189–191 (RWL), and 194–195 (RG). E238 is a binding site for Mn(2+). D287 functions as the Proton donor in the catalytic mechanism.

The protein belongs to the UbiD family. In terms of assembly, homohexamer. Prenylated FMN serves as cofactor. The cofactor is Mn(2+).

It localises to the cell membrane. The enzyme catalyses a 4-hydroxy-3-(all-trans-polyprenyl)benzoate + H(+) = a 2-(all-trans-polyprenyl)phenol + CO2. It participates in cofactor biosynthesis; ubiquinone biosynthesis. In terms of biological role, catalyzes the decarboxylation of 3-octaprenyl-4-hydroxy benzoate to 2-octaprenylphenol, an intermediate step in ubiquinone biosynthesis. This Shewanella halifaxensis (strain HAW-EB4) protein is 3-octaprenyl-4-hydroxybenzoate carboxy-lyase.